A 596-amino-acid chain; its full sequence is Estrogen receptor (596 aa).

Positions 1–185 are modulating (transactivation AF-1); mediates interaction with MACROD1; it reads MTMTLHTKAS…AMESAKETRY (185 aa). A glycan (O-linked (GlcNAc) serine) is linked at S10. A required for interaction with NCOA1 region spans residues 36 to 48; sequence ERPLGEVYMDSSK. The interaction with DDX5; self-association stretch occupies residues 36 to 175; sequence ERPLGEVYMD…LASTSDKGSM (140 aa). Phosphoserine; by CDK2 is present on residues S104 and S106. S119 carries the phosphoserine modification. The disordered stretch occupies residues 144 to 175; that stretch reads EAGPPAYYRPNSDNRRQGGRERLASTSDKGSM. A compositionally biased stretch (basic and acidic residues) spans 155–166; the sequence is SDNRRQGGRERL. A Phosphoserine; by CK2 modification is found at S168. NR C4-type zinc fingers lie at residues 186-206 and 222-246; these read CAVCNDYASGYHYGVWSCEGC and CPATNQCTIDKNRRKSCQACRLRKC. The nuclear receptor DNA-binding region spans 186–251; sequence CAVCNDYASG…RLRKCYEVGM (66 aa). A mediates interaction with DNTTIP2 region spans residues 186–311; sequence CAVCNDYASG…TKKNSPVLSL (126 aa). Residues 252–311 are hinge; it reads MKGGIRKDRRGGRMLKHKRQRDDGEGRNEAVPSGDMRAANLWPSPIMIKHTKKNSPVLSL. Over residues 259 to 270 the composition is skewed to basic residues; sequence DRRGGRMLKHKR. The tract at residues 259–285 is disordered; the sequence is DRRGGRMLKHKRQRDDGEGRNEAVPSG. Asymmetric dimethylarginine; by PRMT1 is present on R261. Positions 263-596 are interaction with AKAP13; the sequence is GRMLKHKRQR…GEAENFPSTV (334 aa). Positions 265-595 are self-association; sequence MLKHKRQRDD…TGEAENFPST (331 aa). Residues 312 to 548 enclose the NR LBD domain; that stretch reads TADQMISALL…DLLLEMLDAH (237 aa). A transactivation AF-2 region spans residues 312–595; it reads TADQMISALL…TGEAENFPST (284 aa). 17beta-estradiol contacts are provided by E354 and R395. The S-palmitoyl cysteine moiety is linked to residue C448. H525 is a binding site for 17beta-estradiol. Residue Y538 is modified to Phosphotyrosine; by Tyr-kinases. T572 carries O-linked (GlcNAc) threonine glycosylation.

It belongs to the nuclear hormone receptor family. NR3 subfamily. Binds DNA as a homodimer. Can form a heterodimer with ESR2. Interacts with coactivator NCOA5. Interacts with PELP1, the interaction is enhanced by 17-beta-estradiol; the interaction increases ESR1 transcriptional activity. Interacts with NCOA7; the interaction is ligand-inducible. Interacts with AKAP13, CUEDC2, HEXIM1, KDM5A, MAP1S, SMARD1, and UBE1C. Interacts with MUC1; the interaction is stimulated by 7 beta-estradiol (E2) and enhances ESR1-mediated transcription. Interacts with DNTTIP2, and UIMC1. Interacts with KMT2D/MLL2. Interacts with ATAD2; the interaction is enhanced by estradiol. Interacts with KIF18A and LDB1. Interacts with RLIM (via its C-terminus). Interacts with MACROD1. Interacts with SH2D4A and PLCG. Interacts with SH2D4A; the interaction blocks binding to PLCG and inhibits estrogen-induced cell proliferation. Interacts with DYNLL1. Interacts with CCDC62; the interaction requires estradiol and appears to enhance the transcription of target genes. Interacts with NR2C1; the interaction prevents homodimerization of ESR1 and suppresses its transcriptional activity and cell growth. Interacts with DNAAF4. Interacts with PRMT2. Interacts with RBFOX2. Interacts with EP300; the interaction is estrogen-dependent and enhanced by CITED1. Interacts with CITED1; the interaction is estrogen-dependent. Interacts with FAM120B, FOXL2, PHB2 and SLC30A9. Interacts with coactivators NCOA3 and NCOA6. Interacts with STK3/MST2 only in the presence of SAV1 and vice-versa. Binds to CSNK1D. Interacts with NCOA2; NCOA2 can interact with ESR1 AF-1 and AF-2 domains simultaneously and mediate their transcriptional synergy. Interacts with DDX5. Interacts with NCOA1; the interaction seems to require a self-association of N-terminal and C-terminal regions. Interacts with ZNF366, DDX17, NFKB1, RELA, SP1 and SP3. Interacts with NRIP1. Interacts with GPER1; the interaction occurs in an estrogen-dependent manner. Interacts with CLOCK and the interaction is stimulated by estrogen. Interacts with TRIP4 (ufmylated); estrogen dependent. Interacts with LMTK3; the interaction phosphorylates ESR1 (in vitro) and protects it against proteasomal degradation. Interacts with CCAR2 (via N-terminus) in a ligand-independent manner. Interacts with ZFHX3. Interacts with SFR1 in a ligand-dependent and -independent manner. Interacts with DCAF13, LATS1 and DCAF1; regulates ESR1 ubiquitination and ubiquitin-mediated proteasomal degradation. Interacts (via DNA-binding domain) with POU4F2 (C-terminus); this interaction increases the estrogen receptor ESR1 transcriptional activity in a DNA- and ligand 17-beta-estradiol-independent manner. Interacts with ESRRB isoform 1. Interacts with UBE3A and WBP2. Interacts with GTF2B. Interacts with RBM39. In the absence of hormonal ligand, interacts with TACC1. Interacts with PI3KR1 or PI3KR2 and PTK2/FAK1. Interacts with SRC. Interacts with BAG1; the interaction is promoted in the absence of estradiol (17-beta-estradiol/E2). Interacts with and ubiquitinated by STUB1; the interaction is promoted in the absence of estradiol (17-beta-estradiol/E2). Interacts with NEDD8. Glycosylated; contains N-acetylglucosamine, probably O-linked. In terms of processing, ubiquitinated; regulated by LATS1 via DCAF1 it leads to ESR1 proteasomal degradation. Deubiquitinated by OTUB1. Ubiquitinated by STUB1/CHIP; in the CA1 hippocampal region following loss of endogenous circulating estradiol (17-beta-estradiol/E2). Ubiquitinated by UBR5, leading to its degradation: UBR5 specifically recognizes and binds ligand-bound ESR1 when it is not associated with coactivators (NCOAs). In presence of NCOAs, the UBR5-degron is not accessible, preventing its ubiquitination and degradation. Post-translationally, phosphorylated by cyclin A/CDK2 and CK1. Phosphorylation probably enhances transcriptional activity. Dephosphorylation at Ser-119 by PPP5C inhibits its transactivation activity. Phosphorylated by LMTK3 (in vitro). Palmitoylated at Cys-448 by ZDHHC7 and ZDHHC21. Palmitoylation is required for plasma membrane targeting and for rapid intracellular signaling via ERK and AKT kinases and cAMP generation, but not for signaling mediated by the nuclear hormone receptor. In terms of processing, dimethylated by PRMT1 at Arg-261. The methylation may favor cytoplasmic localization. Demethylated by JMJD6 at Arg-261.

The protein localises to the nucleus. It is found in the cytoplasm. It localises to the golgi apparatus. The protein resides in the cell membrane. Nuclear hormone receptor. The steroid hormones and their receptors are involved in the regulation of eukaryotic gene expression and affect cellular proliferation and differentiation in target tissues. Ligand-dependent nuclear transactivation involves either direct homodimer binding to a palindromic estrogen response element (ERE) sequence or association with other DNA-binding transcription factors, such as AP-1/c-Jun, c-Fos, ATF-2, Sp1 and Sp3, to mediate ERE-independent signaling. Ligand binding induces a conformational change allowing subsequent or combinatorial association with multiprotein coactivator complexes through LXXLL motifs of their respective components. Mutual transrepression occurs between the estrogen receptor (ER) and NF-kappa-B in a cell-type specific manner. Decreases NF-kappa-B DNA-binding activity and inhibits NF-kappa-B-mediated transcription from the IL6 promoter and displace RELA/p65 and associated coregulators from the promoter. Recruited to the NF-kappa-B response element of the CCL2 and IL8 promoters and can displace CREBBP. Present with NF-kappa-B components RELA/p65 and NFKB1/p50 on ERE sequences. Can also act synergistically with NF-kappa-B to activate transcription involving respective recruitment adjacent response elements; the function involves CREBBP. Can activate the transcriptional activity of TFF1. Also mediates membrane-initiated estrogen signaling involving various kinase cascades. Essential for MTA1-mediated transcriptional regulation of BRCA1 and BCAS3. Maintains neuronal survival in response to ischemic reperfusion injury when in the presence of circulating estradiol (17-beta-estradiol/E2). This Bos taurus (Bovine) protein is Estrogen receptor (ESR1).